Consider the following 372-residue polypeptide: Peptidyl-prolyl cis-trans isomerase D (372 aa).

The PPIase cyclophilin-type domain maps to 10-173 (FFDIQIGQQQ…TDVTIAECGE (164 aa)). The segment at 174-193 (LTGEDYDNADKQTPDATGDP) is disordered. 3 TPR repeats span residues 215–248 (ASEL…LNEF), 268–304 (FTLH…ASAK), and 309–342 (AKVY…APSD).

This sequence belongs to the cyclophilin-type PPIase family. PPIase D subfamily.

The protein resides in the cytoplasm. The enzyme catalyses [protein]-peptidylproline (omega=180) = [protein]-peptidylproline (omega=0). PPIases accelerate the folding of proteins. It catalyzes the cis-trans isomerization of proline imidic peptide bonds in oligopeptides. In Emericella nidulans (strain FGSC A4 / ATCC 38163 / CBS 112.46 / NRRL 194 / M139) (Aspergillus nidulans), this protein is Peptidyl-prolyl cis-trans isomerase D (cpr6).